Reading from the N-terminus, the 527-residue chain is Putative GTP-binding protein 6 (527 aa).

A Hflx-type G domain is found at 306 to 470 (PIISILGYTN…QVETAVMKST (165 aa)). Residues 312-319 (GYTNSGKT), 338-342 (FATLD), 360-363 (DTIG), 429-432 (NKID), and 448-450 (SAL) contribute to the GTP site. 2 residues coordinate Mg(2+): Thr-319 and Thr-340.

The protein belongs to the TRAFAC class OBG-HflX-like GTPase superfamily. HflX GTPase family. Mg(2+) is required as a cofactor.

This is Putative GTP-binding protein 6 (gtpbp6) from Xenopus laevis (African clawed frog).